A 776-amino-acid polypeptide reads, in one-letter code: 5-methyltetrahydropteroyltriglutamate--homocysteine methyltransferase (776 aa).

5-methyltetrahydropteroyltri-L-glutamate-binding positions include 16–19 (RELK) and lysine 112. L-homocysteine contacts are provided by residues 432–434 (IGS) and glutamate 485. Residues 432-434 (IGS) and glutamate 485 each bind L-methionine. 5-methyltetrahydropteroyltri-L-glutamate is bound by residues 516 to 517 (RC) and tryptophan 562. Residue aspartate 600 participates in L-homocysteine binding. L-methionine is bound at residue aspartate 600. Residue glutamate 606 coordinates 5-methyltetrahydropteroyltri-L-glutamate. Residues histidine 642, cysteine 644, and glutamate 666 each coordinate Zn(2+). Residue histidine 695 is the Proton donor of the active site. Cysteine 727 serves as a coordination point for Zn(2+). The disordered stretch occupies residues 755 to 776 (HAGAVHAGTPATRAEHAESALA). A compositionally biased stretch (basic and acidic residues) spans 767–776 (RAEHAESALA).

Belongs to the vitamin-B12 independent methionine synthase family. Zn(2+) serves as cofactor.

It carries out the reaction 5-methyltetrahydropteroyltri-L-glutamate + L-homocysteine = tetrahydropteroyltri-L-glutamate + L-methionine. The protein operates within amino-acid biosynthesis; L-methionine biosynthesis via de novo pathway; L-methionine from L-homocysteine (MetE route): step 1/1. Its function is as follows. Catalyzes the transfer of a methyl group from 5-methyltetrahydrofolate to homocysteine resulting in methionine formation. The polypeptide is 5-methyltetrahydropteroyltriglutamate--homocysteine methyltransferase (Ralstonia nicotianae (strain ATCC BAA-1114 / GMI1000) (Ralstonia solanacearum)).